The sequence spans 394 residues: Elongation factor Tu 2 (394 aa).

One can recognise a tr-type G domain in the interval 10–204; that stretch reads KPHVNVGTIG…YLDTYIPEPE (195 aa). The interval 19 to 26 is G1; sequence GHVDHGKT. A GTP-binding site is contributed by 19–26; it reads GHVDHGKT. Thr-26 serves as a coordination point for Mg(2+). Positions 60–64 are G2; it reads GITIN. A G3 region spans residues 81 to 84; that stretch reads DCPG. Residues 81–85 and 136–139 contribute to the GTP site; these read DCPGH and NKCD. A G4 region spans residues 136–139; that stretch reads NKCD. The segment at 174–176 is G5; it reads SAL.

It belongs to the TRAFAC class translation factor GTPase superfamily. Classic translation factor GTPase family. EF-Tu/EF-1A subfamily. Monomer.

Its subcellular location is the cytoplasm. It catalyses the reaction GTP + H2O = GDP + phosphate + H(+). Functionally, GTP hydrolase that promotes the GTP-dependent binding of aminoacyl-tRNA to the A-site of ribosomes during protein biosynthesis. This chain is Elongation factor Tu 2, found in Yersinia enterocolitica serotype O:8 / biotype 1B (strain NCTC 13174 / 8081).